Reading from the N-terminus, the 311-residue chain is NAD kinase (311 aa).

Asp67 functions as the Proton acceptor in the catalytic mechanism. NAD(+) is bound by residues 67–68, Arg72, 140–141, Arg151, Asp170, 181–186, and Gln240; these read DG, ND, and TAYSLS. Basic and acidic residues predominate over residues 278 to 287; it reads LKEGGSRQDD. Residues 278 to 311 form a disordered region; it reads LKEGGSRQDDENPAATVNPETDSKYPHSHPGSTG.

This sequence belongs to the NAD kinase family. A divalent metal cation serves as cofactor.

The protein resides in the cytoplasm. It carries out the reaction NAD(+) + ATP = ADP + NADP(+) + H(+). Its function is as follows. Involved in the regulation of the intracellular balance of NAD and NADP, and is a key enzyme in the biosynthesis of NADP. Catalyzes specifically the phosphorylation on 2'-hydroxyl of the adenosine moiety of NAD to yield NADP. This Moorella thermoacetica (strain ATCC 39073 / JCM 9320) protein is NAD kinase.